The following is a 461-amino-acid chain: Bifunctional protein GlmU (461 aa).

Residues 1–232 form a pyrophosphorylase region; sequence MNLQIIILAA…SFEVQGINNR (232 aa). UDP-N-acetyl-alpha-D-glucosamine contacts are provided by residues 8–11, lysine 22, glutamine 73, and 78–79; these read LAAG and GT. Aspartate 102 provides a ligand contact to Mg(2+). Positions 142, 157, and 230 each coordinate UDP-N-acetyl-alpha-D-glucosamine. Residue asparagine 230 coordinates Mg(2+). Residues 233 to 253 are linker; sequence QQLQQLERTWQQRAANQLMEK. Residues 254-461 are N-acetyltransferase; the sequence is GATLADANRF…WKRPVKRERD (208 aa). UDP-N-acetyl-alpha-D-glucosamine is bound by residues arginine 336 and lysine 354. Histidine 366 functions as the Proton acceptor in the catalytic mechanism. Residues tyrosine 369 and asparagine 380 each contribute to the UDP-N-acetyl-alpha-D-glucosamine site. Acetyl-CoA is bound by residues alanine 383, 389–390, serine 408, and alanine 426; that span reads NY.

This sequence in the N-terminal section; belongs to the N-acetylglucosamine-1-phosphate uridyltransferase family. In the C-terminal section; belongs to the transferase hexapeptide repeat family. In terms of assembly, homotrimer. Mg(2+) serves as cofactor.

It is found in the cytoplasm. It carries out the reaction alpha-D-glucosamine 1-phosphate + acetyl-CoA = N-acetyl-alpha-D-glucosamine 1-phosphate + CoA + H(+). It catalyses the reaction N-acetyl-alpha-D-glucosamine 1-phosphate + UTP + H(+) = UDP-N-acetyl-alpha-D-glucosamine + diphosphate. The protein operates within nucleotide-sugar biosynthesis; UDP-N-acetyl-alpha-D-glucosamine biosynthesis; N-acetyl-alpha-D-glucosamine 1-phosphate from alpha-D-glucosamine 6-phosphate (route II): step 2/2. It participates in nucleotide-sugar biosynthesis; UDP-N-acetyl-alpha-D-glucosamine biosynthesis; UDP-N-acetyl-alpha-D-glucosamine from N-acetyl-alpha-D-glucosamine 1-phosphate: step 1/1. Its pathway is bacterial outer membrane biogenesis; LPS lipid A biosynthesis. Catalyzes the last two sequential reactions in the de novo biosynthetic pathway for UDP-N-acetylglucosamine (UDP-GlcNAc). The C-terminal domain catalyzes the transfer of acetyl group from acetyl coenzyme A to glucosamine-1-phosphate (GlcN-1-P) to produce N-acetylglucosamine-1-phosphate (GlcNAc-1-P), which is converted into UDP-GlcNAc by the transfer of uridine 5-monophosphate (from uridine 5-triphosphate), a reaction catalyzed by the N-terminal domain. The protein is Bifunctional protein GlmU of Legionella pneumophila (strain Paris).